Here is a 199-residue protein sequence, read N- to C-terminus: Pyridoxal 5'-phosphate synthase subunit PdxT (199 aa).

Residue 52-54 (GES) participates in L-glutamine binding. The active-site Nucleophile is the Cys-84. Residues Arg-115 and 143–144 (IR) each bind L-glutamine. Active-site charge relay system residues include His-179 and Glu-181.

The protein belongs to the glutaminase PdxT/SNO family. In terms of assembly, in the presence of PdxS, forms a dodecamer of heterodimers. Only shows activity in the heterodimer.

The catalysed reaction is aldehydo-D-ribose 5-phosphate + D-glyceraldehyde 3-phosphate + L-glutamine = pyridoxal 5'-phosphate + L-glutamate + phosphate + 3 H2O + H(+). It catalyses the reaction L-glutamine + H2O = L-glutamate + NH4(+). It functions in the pathway cofactor biosynthesis; pyridoxal 5'-phosphate biosynthesis. In terms of biological role, catalyzes the hydrolysis of glutamine to glutamate and ammonia as part of the biosynthesis of pyridoxal 5'-phosphate. The resulting ammonia molecule is channeled to the active site of PdxS. The polypeptide is Pyridoxal 5'-phosphate synthase subunit PdxT (Methanosarcina mazei (strain ATCC BAA-159 / DSM 3647 / Goe1 / Go1 / JCM 11833 / OCM 88) (Methanosarcina frisia)).